A 131-amino-acid chain; its full sequence is Small ribosomal subunit protein uS8 (131 aa).

The protein belongs to the universal ribosomal protein uS8 family. Part of the 30S ribosomal subunit. Contacts proteins S5 and S12.

In terms of biological role, one of the primary rRNA binding proteins, it binds directly to 16S rRNA central domain where it helps coordinate assembly of the platform of the 30S subunit. The chain is Small ribosomal subunit protein uS8 from Hyphomonas neptunium (strain ATCC 15444).